Consider the following 183-residue polypeptide: MNAYVRPALSLALLMTLLTGVLYPLAVTGVAQVAFPNQANGSLVRDEHGQVRGSALIAQDFQGDGWFHSRPSAGAYATVASSASNLSPSNPALAERVKGDAATLFQAQQGPVPQALLTTSGSGLDPHLPPEAVAYQIPRVAAARQLPVERLQALQEEATLHPLIGPPVVNVLALNQKIEQLSH.

Residues 11–31 (LALLMTLLTGVLYPLAVTGVA) traverse the membrane as a helical segment.

It belongs to the KdpC family. As to quaternary structure, the system is composed of three essential subunits: KdpA, KdpB and KdpC.

The protein localises to the cell inner membrane. Functionally, part of the high-affinity ATP-driven potassium transport (or Kdp) system, which catalyzes the hydrolysis of ATP coupled with the electrogenic transport of potassium into the cytoplasm. This subunit acts as a catalytic chaperone that increases the ATP-binding affinity of the ATP-hydrolyzing subunit KdpB by the formation of a transient KdpB/KdpC/ATP ternary complex. This is Potassium-transporting ATPase KdpC subunit from Pseudomonas putida (strain GB-1).